The chain runs to 321 residues: Lipoyl synthase (321 aa).

Residues Cys-68, Cys-73, Cys-79, Cys-94, Cys-98, Cys-101, and Ser-308 each contribute to the [4Fe-4S] cluster site. The region spanning 80–297 (FNHGTATFMI…KEIALELGFT (218 aa)) is the Radical SAM core domain.

It belongs to the radical SAM superfamily. Lipoyl synthase family. The cofactor is [4Fe-4S] cluster.

Its subcellular location is the cytoplasm. The catalysed reaction is [[Fe-S] cluster scaffold protein carrying a second [4Fe-4S](2+) cluster] + N(6)-octanoyl-L-lysyl-[protein] + 2 oxidized [2Fe-2S]-[ferredoxin] + 2 S-adenosyl-L-methionine + 4 H(+) = [[Fe-S] cluster scaffold protein] + N(6)-[(R)-dihydrolipoyl]-L-lysyl-[protein] + 4 Fe(3+) + 2 hydrogen sulfide + 2 5'-deoxyadenosine + 2 L-methionine + 2 reduced [2Fe-2S]-[ferredoxin]. It functions in the pathway protein modification; protein lipoylation via endogenous pathway; protein N(6)-(lipoyl)lysine from octanoyl-[acyl-carrier-protein]: step 2/2. Its function is as follows. Catalyzes the radical-mediated insertion of two sulfur atoms into the C-6 and C-8 positions of the octanoyl moiety bound to the lipoyl domains of lipoate-dependent enzymes, thereby converting the octanoylated domains into lipoylated derivatives. The polypeptide is Lipoyl synthase (Aliivibrio fischeri (strain MJ11) (Vibrio fischeri)).